Consider the following 37-residue polypeptide: uncharacterized protein (37 aa).

A helical transmembrane segment spans residues 13–33 (TFLTIIVLLMIVFGIAIVALL).

Its subcellular location is the host membrane. This is an uncharacterized protein from Acidianus convivator (ABV).